We begin with the raw amino-acid sequence, 304 residues long: Protoheme IX farnesyltransferase 1 (304 aa).

The next 8 helical transmembrane spans lie at 24–44 (VVVL…KAPL), 47–67 (FVPW…AGAA), 99–119 (MALG…LAFT), 122–142 (LTAW…TGFL), 150–170 (IVIG…AITG), 176–196 (PLLL…ALCI), 228–248 (LVLF…LVYL), and 280–300 (YSIV…YLPL).

This sequence belongs to the UbiA prenyltransferase family. Protoheme IX farnesyltransferase subfamily.

The protein localises to the cell inner membrane. The catalysed reaction is heme b + (2E,6E)-farnesyl diphosphate + H2O = Fe(II)-heme o + diphosphate. It functions in the pathway porphyrin-containing compound metabolism; heme O biosynthesis; heme O from protoheme: step 1/1. Functionally, converts heme B (protoheme IX) to heme O by substitution of the vinyl group on carbon 2 of heme B porphyrin ring with a hydroxyethyl farnesyl side group. This is Protoheme IX farnesyltransferase 1 from Pseudomonas paraeruginosa (strain DSM 24068 / PA7) (Pseudomonas aeruginosa (strain PA7)).